The primary structure comprises 215 residues: Cytochrome b6 (215 aa).

Residues 32–52 (IFYCLGGITLTCFLVQVATGF) traverse the membrane as a helical segment. Cys35 lines the heme c pocket. Heme b is bound by residues His86 and His100. 3 helical membrane passes run 90-110 (ASMM…TGGF), 116-136 (LTWV…VTGY), and 186-206 (LHTF…FPMI). Heme b is bound by residues His187 and His202.

It belongs to the cytochrome b family. PetB subfamily. The 4 large subunits of the cytochrome b6-f complex are cytochrome b6, subunit IV (17 kDa polypeptide, PetD), cytochrome f and the Rieske protein, while the 4 small subunits are PetG, PetL, PetM and PetN. The complex functions as a dimer. Requires heme b as cofactor. The cofactor is heme c.

The protein localises to the plastid. It localises to the chloroplast thylakoid membrane. In terms of biological role, component of the cytochrome b6-f complex, which mediates electron transfer between photosystem II (PSII) and photosystem I (PSI), cyclic electron flow around PSI, and state transitions. This is Cytochrome b6 from Solanum bulbocastanum (Wild potato).